A 311-amino-acid chain; its full sequence is Ribonuclease Z (311 aa).

His61, His63, Asp65, His66, His139, Asp210, and His268 together coordinate Zn(2+). Asp65 acts as the Proton acceptor in catalysis.

Belongs to the RNase Z family. As to quaternary structure, homodimer. Zn(2+) is required as a cofactor.

It catalyses the reaction Endonucleolytic cleavage of RNA, removing extra 3' nucleotides from tRNA precursor, generating 3' termini of tRNAs. A 3'-hydroxy group is left at the tRNA terminus and a 5'-phosphoryl group is left at the trailer molecule.. In terms of biological role, zinc phosphodiesterase, which displays some tRNA 3'-processing endonuclease activity. Probably involved in tRNA maturation, by removing a 3'-trailer from precursor tRNA. In Haloarcula marismortui (strain ATCC 43049 / DSM 3752 / JCM 8966 / VKM B-1809) (Halobacterium marismortui), this protein is Ribonuclease Z.